Consider the following 193-residue polypeptide: Ion-translocating oxidoreductase complex subunit A (193 aa).

6 helical membrane passes run 4–24 (LALI…KFLG), 38–58 (AMGM…CSYL), 65–85 (APLG…AVVV), 102–122 (VLGI…VALL), 134–154 (AVYG…FAAL), and 171–191 (SVAL…AGLV).

This sequence belongs to the NqrDE/RnfAE family. The complex is composed of six subunits: RnfA, RnfB, RnfC, RnfD, RnfE and RnfG.

It localises to the cell inner membrane. In terms of biological role, part of a membrane-bound complex that couples electron transfer with translocation of ions across the membrane. This is Ion-translocating oxidoreductase complex subunit A from Alkalilimnicola ehrlichii (strain ATCC BAA-1101 / DSM 17681 / MLHE-1).